The following is a 309-amino-acid chain: tRNA uridine(34) hydroxylase (309 aa).

Positions 137–232 constitute a Rhodanese domain; sequence RGDEVVFFDG…YGEKYGDKGL (96 aa). C192 acts as the Cysteine persulfide intermediate in catalysis.

The protein belongs to the TrhO family.

It carries out the reaction uridine(34) in tRNA + AH2 + O2 = 5-hydroxyuridine(34) in tRNA + A + H2O. Catalyzes oxygen-dependent 5-hydroxyuridine (ho5U) modification at position 34 in tRNAs. The sequence is that of tRNA uridine(34) hydroxylase from Corynebacterium jeikeium (strain K411).